A 55-amino-acid chain; its full sequence is Large ribosomal subunit protein bL33m (55 aa).

It belongs to the bacterial ribosomal protein bL33 family. Component of the mitochondrial large ribosomal subunit (mt-LSU). Mature yeast 74S mitochondrial ribosomes consist of a small (37S) and a large (54S) subunit. The 37S small subunit contains a 15S ribosomal RNA (15S mt-rRNA) and at least 32 different proteins. The 54S large subunit contains a 21S rRNA (21S mt-rRNA) and at least 45 different proteins. bL33m stabilizes the tRNA acceptor stem in the E-site.

It localises to the mitochondrion. In terms of biological role, component of the mitochondrial ribosome (mitoribosome), a dedicated translation machinery responsible for the synthesis of mitochondrial genome-encoded proteins, including at least some of the essential transmembrane subunits of the mitochondrial respiratory chain. The mitoribosomes are attached to the mitochondrial inner membrane and translation products are cotranslationally integrated into the membrane. In Schizosaccharomyces pombe (strain 972 / ATCC 24843) (Fission yeast), this protein is Large ribosomal subunit protein bL33m (mrpl39).